Reading from the N-terminus, the 640-residue chain is Threonine--tRNA ligase (640 aa).

A TGS domain is found at 1 to 59; the sequence is MKIKVKLPDGKEKEYDRGITPAEIAKELGVKKAIGAVVNGELWDLKRPIENDCELRLVT. The catalytic stretch occupies residues 240–531; the sequence is DHRKLGPHLE…LIEHFAGAFP (292 aa). Zn(2+) is bound by residues cysteine 332, histidine 383, and histidine 508.

The protein belongs to the class-II aminoacyl-tRNA synthetase family. Homodimer. Requires Zn(2+) as cofactor.

The protein localises to the cytoplasm. It catalyses the reaction tRNA(Thr) + L-threonine + ATP = L-threonyl-tRNA(Thr) + AMP + diphosphate + H(+). Its function is as follows. Catalyzes the attachment of threonine to tRNA(Thr) in a two-step reaction: L-threonine is first activated by ATP to form Thr-AMP and then transferred to the acceptor end of tRNA(Thr). Also edits incorrectly charged L-seryl-tRNA(Thr). The polypeptide is Threonine--tRNA ligase (Thermotoga petrophila (strain ATCC BAA-488 / DSM 13995 / JCM 10881 / RKU-1)).